Consider the following 275-residue polypeptide: Large ribosomal subunit protein uL2c (275 aa).

The interval Val-224–His-263 is disordered.

Belongs to the universal ribosomal protein uL2 family. As to quaternary structure, part of the 50S ribosomal subunit.

The protein resides in the plastid. It is found in the chloroplast. This chain is Large ribosomal subunit protein uL2c (rpl2), found in Chaetosphaeridium globosum (Charophycean green alga).